The following is a 336-amino-acid chain: tRNA(Ile)-lysidine synthase (336 aa).

40 to 45 (SGGQDS) serves as a coordination point for ATP.

It belongs to the tRNA(Ile)-lysidine synthase family.

The protein localises to the cytoplasm. The catalysed reaction is cytidine(34) in tRNA(Ile2) + L-lysine + ATP = lysidine(34) in tRNA(Ile2) + AMP + diphosphate + H(+). Functionally, ligates lysine onto the cytidine present at position 34 of the AUA codon-specific tRNA(Ile) that contains the anticodon CAU, in an ATP-dependent manner. Cytidine is converted to lysidine, thus changing the amino acid specificity of the tRNA from methionine to isoleucine. The polypeptide is tRNA(Ile)-lysidine synthase (Prochlorococcus marinus (strain SARG / CCMP1375 / SS120)).